A 337-amino-acid chain; its full sequence is ELAV-like protein 1-A (337 aa).

RRM domains follow at residues 20–109 (TNLI…FARP), 117–197 (ANLY…FAAN), and 255–333 (WCIF…FKTS).

It belongs to the RRM elav family. Interacts (via RRM3) with cirbp. Unable to form oligomers. Part of a ribonucleoprotein (RNP) complex, at least composed of elavl1/elrA and/or elavl2/elrB, igf2bp3/vg1RBP, ddx6/Xp54, ybx2/frgy2, lsm14b/rap55b and, in a subset of RNP complexes, stau1/staufen. Ubiquitously expressed in adults.

The protein localises to the cytoplasm. It localises to the cell cortex. Functionally, RNA-binding protein that binds to the 3'-UTR region of mRNAs and increases their stability. Involved in embryonic stem cells (ESCs) differentiation: preferentially binds mRNAs that are not methylated by N6-methyladenosine (m6A), stabilizing them, promoting ESCs differentiation. Binds to poly-U elements and AU-rich elements (AREs) in the 3'-UTR of target mRNAs. May be involved in cytoplasmic mRNA polyadenylation. Acts cooperatively with cribp to stabilize AU-rich sequence (ARE)-containing mRNAs. May play a role during gastrulation. Required for the vegetal localization of vg1 mRNA. This Xenopus laevis (African clawed frog) protein is ELAV-like protein 1-A (elavl1-a).